The chain runs to 604 residues: Aspartate--tRNA(Asp/Asn) ligase (604 aa).

L-aspartate is bound at residue Glu-175. The segment at Gln-199–Lys-202 is aspartate. The L-aspartate site is built by Arg-221 and His-451. Arg-221 to Glu-223 lines the ATP pocket. Position 485 (Glu-485) interacts with ATP. Arg-492 is a binding site for L-aspartate. Residue Gly-537 to Arg-540 coordinates ATP.

The protein belongs to the class-II aminoacyl-tRNA synthetase family. Type 1 subfamily. Homodimer.

The protein resides in the cytoplasm. The enzyme catalyses tRNA(Asx) + L-aspartate + ATP = L-aspartyl-tRNA(Asx) + AMP + diphosphate. Functionally, aspartyl-tRNA synthetase with relaxed tRNA specificity since it is able to aspartylate not only its cognate tRNA(Asp) but also tRNA(Asn). Reaction proceeds in two steps: L-aspartate is first activated by ATP to form Asp-AMP and then transferred to the acceptor end of tRNA(Asp/Asn). The polypeptide is Aspartate--tRNA(Asp/Asn) ligase (Erythrobacter litoralis (strain HTCC2594)).